Here is a 93-residue protein sequence, read N- to C-terminus: UPF0358 protein YlaN (93 aa).

Belongs to the UPF0358 family.

Its function is as follows. Essential for cell growth and for normal cell shape. The polypeptide is UPF0358 protein YlaN (ylaN) (Bacillus subtilis (strain 168)).